We begin with the raw amino-acid sequence, 70 residues long: uncharacterized protein (70 aa).

The helical transmembrane segment at 50-70 threads the bilayer; the sequence is INVVLVLIIALIIFILMLDGV.

Its subcellular location is the membrane. This is an uncharacterized protein from Dictyostelium discoideum (Social amoeba).